Consider the following 480-residue polypeptide: Coronin-2B (480 aa).

5 WD repeats span residues 85–125, 135–177, 179–217, 220–263, and 265–308; these read GHQG…LKRN, GHSR…KMID, HRDV…VLQE, CKTH…MPVT, and EEID…PYLT. Residues 436–475 are a coiled coil; the sequence is NELLRMFFRQQEEIRRLKEQLSQRDLLVRQLELELKNLRN.

It belongs to the WD repeat coronin family.

The protein resides in the cytoplasm. The protein localises to the cytoskeleton. May play a role in the reorganization of neuronal actin structure. This is Coronin-2B (coro2b) from Xenopus tropicalis (Western clawed frog).